Consider the following 582-residue polypeptide: 2-succinyl-5-enolpyruvyl-6-hydroxy-3-cyclohexene-1-carboxylate synthase (582 aa).

It belongs to the TPP enzyme family. MenD subfamily. Homodimer. Mg(2+) is required as a cofactor. Mn(2+) serves as cofactor. It depends on thiamine diphosphate as a cofactor.

It carries out the reaction isochorismate + 2-oxoglutarate + H(+) = 5-enolpyruvoyl-6-hydroxy-2-succinyl-cyclohex-3-ene-1-carboxylate + CO2. It participates in quinol/quinone metabolism; 1,4-dihydroxy-2-naphthoate biosynthesis; 1,4-dihydroxy-2-naphthoate from chorismate: step 2/7. It functions in the pathway cofactor biosynthesis; phylloquinone biosynthesis. Its function is as follows. Catalyzes the thiamine diphosphate-dependent decarboxylation of 2-oxoglutarate and the subsequent addition of the resulting succinic semialdehyde-thiamine pyrophosphate anion to isochorismate to yield 2-succinyl-5-enolpyruvyl-6-hydroxy-3-cyclohexene-1-carboxylate (SEPHCHC). In Trichodesmium erythraeum (strain IMS101), this protein is 2-succinyl-5-enolpyruvyl-6-hydroxy-3-cyclohexene-1-carboxylate synthase.